Consider the following 423-residue polypeptide: COP9 signalosome complex subunit 3 (423 aa).

Ala2 is subject to N-acetylalanine. Residues 197 to 365 (NFERALYFYE…GMVSFHDNPE (169 aa)) form the PCI domain. Positions 402–423 (QFVQKSMGSQEDDSGNKPSSYS) are disordered. Residues Ser407, Ser410, and Ser423 each carry the phosphoserine modification.

It belongs to the CSN3 family. Component of the CSN complex, composed of COPS1/GPS1, COPS2, COPS3, COPS4, COPS5, COPS6, COPS7 (COPS7A or COPS7B), COPS8 and COPS9. In the complex, it probably interacts directly with COPS1, COPS4, COPS8 and COPS9. Interacts with CK2 and PKD. Interacts with the translation initiation factor EIF3S6 and IKBKG. Interacts with ERCC6. In terms of tissue distribution, widely expressed.

The protein resides in the cytoplasm. It localises to the nucleus. Functionally, component of the COP9 signalosome complex (CSN), a complex involved in various cellular and developmental processes. The CSN complex is an essential regulator of the ubiquitin (Ubl) conjugation pathway by mediating the deneddylation of the cullin subunits of SCF-type E3 ligase complexes, leading to decrease the Ubl ligase activity of SCF-type complexes such as SCF, CSA or DDB2. The complex is also involved in phosphorylation of p53/TP53, c-jun/JUN, IkappaBalpha/NFKBIA, ITPK1 and IRF8/ICSBP, possibly via its association with CK2 and PKD kinases. CSN-dependent phosphorylation of TP53 and JUN promotes and protects degradation by the Ubl system, respectively. Essential to maintain the survival of epiblast cells and thus the development of the postimplantation embryo. In Mus musculus (Mouse), this protein is COP9 signalosome complex subunit 3 (Cops3).